The primary structure comprises 199 residues: GTP cyclohydrolase-2 (199 aa).

A GTP-binding site is contributed by 49-53; the sequence is RIHSE. Residues Cys-54, Cys-65, and Cys-67 each coordinate Zn(2+). Residues Gln-70, 92–94, and Thr-114 contribute to the GTP site; that span reads EGR. Asp-126 functions as the Proton acceptor in the catalytic mechanism. Arg-128 (nucleophile) is an active-site residue. Residues Thr-149 and Lys-154 each coordinate GTP. A disordered region spans residues 172–199; the sequence is ETGRNPHNSHYLETKRGKLGHLLEGDSE.

It belongs to the GTP cyclohydrolase II family. Zn(2+) is required as a cofactor.

The enzyme catalyses GTP + 4 H2O = 2,5-diamino-6-hydroxy-4-(5-phosphoribosylamino)-pyrimidine + formate + 2 phosphate + 3 H(+). Its pathway is cofactor biosynthesis; riboflavin biosynthesis; 5-amino-6-(D-ribitylamino)uracil from GTP: step 1/4. Its function is as follows. Catalyzes the conversion of GTP to 2,5-diamino-6-ribosylamino-4(3H)-pyrimidinone 5'-phosphate (DARP), formate and pyrophosphate. This is GTP cyclohydrolase-2 from Teredinibacter turnerae (strain ATCC 39867 / T7901).